The following is a 160-amino-acid chain: GTP-dependent dephospho-CoA kinase (160 aa).

The GTP site is built by aspartate 45, isoleucine 46, valine 47, aspartate 59, lysine 61, glutamate 108, and aspartate 130.

Belongs to the GTP-dependent DPCK family.

The catalysed reaction is 3'-dephospho-CoA + GTP = GDP + CoA + H(+). It participates in cofactor biosynthesis; coenzyme A biosynthesis. Catalyzes the GTP-dependent phosphorylation of the 3'-hydroxyl group of dephosphocoenzyme A to form coenzyme A (CoA). The polypeptide is GTP-dependent dephospho-CoA kinase (Staphylothermus marinus (strain ATCC 43588 / DSM 3639 / JCM 9404 / F1)).